A 218-amino-acid polypeptide reads, in one-letter code: MACGLALKRPLQHEYESFLTDETYNGEAKRARTQCPPFRAQMGTIAATLPSTSTFAQKFKEQEESVFQAATLMTRLSRNQLKTYLSSEVKNLRKRKAIPRSNDFDDDGDQRGDGCSSNYSKAYRAPSSPKSGSDSEGEAPSTSVTDRSSAKREFTMANVQMICERLLKQQEIRLRNEFEMVLTKKLDEQHQQYVQFAAEQLNSKCVSTGDDYSYSYLS.

A disordered region spans residues 96–150 (KAIPRSNDFDDDGDQRGDGCSSNYSKAYRAPSSPKSGSDSEGEAPSTSVTDRSSA). The span at 128-147 (SPKSGSDSEGEAPSTSVTDR) shows a compositional bias: polar residues.

This sequence belongs to the akirin family. Interacts with hda-1, a component of the NuRD complex. Interacts with let-418, a component of the NuRD and MEC complexes. Interacts with the transcription factor ceh-18. Interacts with ima-2. As to expression, localizes to somatic tissues throughout the body, including muscle cells. Expressed in lateral epithelial seam cells, the hyp7 epidermal syncytium, and multiple head and tail neurons.

Its subcellular location is the nucleus. Its function is as follows. Molecular adapter that acts as a bridge between a variety of multiprotein complexes, and which is involved in antifungal innate immunity, development of the muscle and sister chromatid cohesion. Plays a role in antifungal innate immunity by acting as a bridge between components of the NuRD (Nucleosome Remodeling and Deacetylase) and MEC chromatin remodeling complexes. NuRD and MEC complexes bind to the promoters of antimicrobial peptide genes and may recruit other proteins such as ceh-18 to control gene expression in response to fungal infection. During meiotic prophase I, plays a role in the disassembly of synaptonemal complex proteins and in the regulation of chromosome condensation and segregation. Together with nuclear import receptor ima-2, required for the import and load of cohesin complex proteins in meiotic nuclei, possibly by acting as a bridge between ima-2 and cohesins. Required for embryonic development of muscle tissue. This is Akirin from Caenorhabditis elegans.